Reading from the N-terminus, the 62-residue chain is uncharacterized protein (62 aa).

It localises to the plastid. The protein resides in the chloroplast. This is an uncharacterized protein from Chlamydomonas reinhardtii (Chlamydomonas smithii).